The primary structure comprises 130 residues: Small ribosomal subunit protein uS9 (130 aa).

Residues 110–130 form a disordered region; that stretch reads AKERKKYGRKGARARFQFSKR. A compositionally biased stretch (basic residues) spans 111-130; that stretch reads KERKKYGRKGARARFQFSKR.

The protein belongs to the universal ribosomal protein uS9 family.

The chain is Small ribosomal subunit protein uS9 from Syntrophotalea carbinolica (strain DSM 2380 / NBRC 103641 / GraBd1) (Pelobacter carbinolicus).